Here is a 92-residue protein sequence, read N- to C-terminus: Large ribosomal subunit protein bL25 (92 aa).

This sequence belongs to the bacterial ribosomal protein bL25 family. As to quaternary structure, part of the 50S ribosomal subunit; part of the 5S rRNA/L5/L18/L25 subcomplex. Contacts the 5S rRNA. Binds to the 5S rRNA independently of L5 and L18.

Its function is as follows. This is one of the proteins that binds to the 5S RNA in the ribosome where it forms part of the central protuberance. This Photobacterium damsela subsp. piscicida (Pasteurella piscicida) protein is Large ribosomal subunit protein bL25.